The primary structure comprises 338 residues: DNA-directed RNA polymerase subunit alpha (338 aa).

The span at 1 to 10 (MIQKNWQTLE) shows a compositional bias: polar residues. Residues 1-24 (MIQKNWQTLEKPSKLDITPGSDPK) are disordered. The alpha N-terminal domain (alpha-NTD) stretch occupies residues 1 to 234 (MIQKNWQTLE…DQLQMFINFE (234 aa)). Residues 250–338 (FNKNLLRKVD…DLAKRLEEPY (89 aa)) form an alpha C-terminal domain (alpha-CTD) region.

The protein belongs to the RNA polymerase alpha chain family. Homodimer. The RNAP catalytic core consists of 2 alpha, 1 beta, 1 beta' and 1 omega subunit. When a sigma factor is associated with the core the holoenzyme is formed, which can initiate transcription.

The catalysed reaction is RNA(n) + a ribonucleoside 5'-triphosphate = RNA(n+1) + diphosphate. DNA-dependent RNA polymerase catalyzes the transcription of DNA into RNA using the four ribonucleoside triphosphates as substrates. The sequence is that of DNA-directed RNA polymerase subunit alpha from Rhodospirillum centenum (strain ATCC 51521 / SW).